A 595-amino-acid chain; its full sequence is Mitoguardin 1 (595 aa).

Transmembrane regions (helical) follow at residues 11–31 (LPIK…YYSL) and 38–58 (TGTK…IIIA).

It belongs to the mitoguardin family. In terms of assembly, homodimer and heterodimer; forms heterodimers with miga2.

It localises to the mitochondrion outer membrane. Its function is as follows. Regulator of mitochondrial fusion: acts by forming homo- and heterodimers at the mitochondrial outer membrane and facilitating the formation of pld6/MitoPLD dimers. May act by regulating phospholipid metabolism via pld6/MitoPLD. The chain is Mitoguardin 1 from Danio rerio (Zebrafish).